The primary structure comprises 252 residues: 5'-nucleotidase SurE (252 aa).

A divalent metal cation-binding residues include aspartate 8, aspartate 9, serine 39, and asparagine 91.

This sequence belongs to the SurE nucleotidase family. Requires a divalent metal cation as cofactor.

The protein resides in the cytoplasm. The enzyme catalyses a ribonucleoside 5'-phosphate + H2O = a ribonucleoside + phosphate. In terms of biological role, nucleotidase that shows phosphatase activity on nucleoside 5'-monophosphates. In Bordetella pertussis (strain Tohama I / ATCC BAA-589 / NCTC 13251), this protein is 5'-nucleotidase SurE.